The following is a 708-amino-acid chain: Probable inactive lysine-specific demethylase JMJ19 (708 aa).

A disordered region spans residues 35–59 (VPRDKESPRSVSRQEQTTGFGTDDK). The segment covering 43-54 (RSVSRQEQTTGF) has biased composition (polar residues). The JmjN domain maps to 108-149 (APVFNPTEEEFRDTLSYISSLRDRAEPYGICCVVPPPSWKPP). One can recognise a JmjC domain in the interval 293-454 (SSGWNLNSTA…HGDIAVQVNQ (162 aa)). Residues C544, C547, C558, C560, C567, H570, C575, and C577 each contribute to the Zn(2+) site. The RING-type; degenerate zinc finger occupies 544–581 (CCVCLGDLYLSAVNCSCSANRYSCLNHMRKLCACPCDR). Residues 646–653 (TRKDVAAG) carry the Nuclear localization signal motif. Basic and acidic residues predominate over residues 678-694 (AKETLESCSKKSNRPCD). Residues 678–708 (AKETLESCSKKSNRPCDNDSSEANAPKKQKQ) are disordered.

Belongs to the JARID1 histone demethylase family. As to expression, expressed in inflorescences, roots, siliques, leaves and stems.

It localises to the nucleus. The polypeptide is Probable inactive lysine-specific demethylase JMJ19 (Arabidopsis thaliana (Mouse-ear cress)).